The sequence spans 220 residues: Deoxyribose-phosphate aldolase (220 aa).

Catalysis depends on Asp89, which acts as the Proton donor/acceptor. Lys151 functions as the Schiff-base intermediate with acetaldehyde in the catalytic mechanism. Lys180 (proton donor/acceptor) is an active-site residue.

It belongs to the DeoC/FbaB aldolase family. DeoC type 1 subfamily.

Its subcellular location is the cytoplasm. It catalyses the reaction 2-deoxy-D-ribose 5-phosphate = D-glyceraldehyde 3-phosphate + acetaldehyde. Its pathway is carbohydrate degradation; 2-deoxy-D-ribose 1-phosphate degradation; D-glyceraldehyde 3-phosphate and acetaldehyde from 2-deoxy-alpha-D-ribose 1-phosphate: step 2/2. Its function is as follows. Catalyzes a reversible aldol reaction between acetaldehyde and D-glyceraldehyde 3-phosphate to generate 2-deoxy-D-ribose 5-phosphate. The sequence is that of Deoxyribose-phosphate aldolase from Streptococcus pneumoniae (strain Taiwan19F-14).